The chain runs to 399 residues: Yellow-related salivary protein M10 (399 aa).

The N-terminal stretch at Met-1–Cys-18 is a signal peptide. Asn-29 and Asn-83 each carry an N-linked (GlcNAc...) asparagine glycan.

This sequence belongs to the major royal jelly protein family. Salivary gland (at protein level).

The protein resides in the secreted. Functionally, probably modulates blood feeding of sand flies on vertebrate species by binding and sequestering different mediators involved in the host response. Functions as a chemoattractant for host neutrophils; likely acts through a G-protein-coupled receptor and effect is dependent on calcium influx and phosphatidylinositol 3-kinases (PI3K) activity. In terms of biological role, (Microbial infection) Probably enhances infection caused by Leishmania species in the host through augmentation of host neutrophil recruitment into the skin. The protein is Yellow-related salivary protein M10 of Phlebotomus duboscqi (Sandfly).